The sequence spans 70 residues: Protein SlyX homolog (70 aa).

This sequence belongs to the SlyX family.

This chain is Protein SlyX homolog, found in Shewanella sp. (strain MR-7).